The sequence spans 414 residues: UDP-N-acetylglucosamine 1-carboxyvinyltransferase (414 aa).

19–20 (KN) is a binding site for phosphoenolpyruvate. Position 89 (Arg89) interacts with UDP-N-acetyl-alpha-D-glucosamine. The active-site Proton donor is Cys113. Cys113 is subject to 2-(S-cysteinyl)pyruvic acid O-phosphothioketal. UDP-N-acetyl-alpha-D-glucosamine contacts are provided by residues 118–122 (RPIDL), Asp301, and Val323.

The protein belongs to the EPSP synthase family. MurA subfamily.

The protein resides in the cytoplasm. The enzyme catalyses phosphoenolpyruvate + UDP-N-acetyl-alpha-D-glucosamine = UDP-N-acetyl-3-O-(1-carboxyvinyl)-alpha-D-glucosamine + phosphate. The protein operates within cell wall biogenesis; peptidoglycan biosynthesis. Functionally, cell wall formation. Adds enolpyruvyl to UDP-N-acetylglucosamine. This Bdellovibrio bacteriovorus (strain ATCC 15356 / DSM 50701 / NCIMB 9529 / HD100) protein is UDP-N-acetylglucosamine 1-carboxyvinyltransferase.